We begin with the raw amino-acid sequence, 134 residues long: Small ribosomal subunit protein uS8 (134 aa).

Belongs to the universal ribosomal protein uS8 family. As to quaternary structure, part of the 30S ribosomal subunit. Contacts proteins S5 and S12.

Its function is as follows. One of the primary rRNA binding proteins, it binds directly to 16S rRNA central domain where it helps coordinate assembly of the platform of the 30S subunit. The sequence is that of Small ribosomal subunit protein uS8 from Kosmotoga olearia (strain ATCC BAA-1733 / DSM 21960 / TBF 19.5.1).